Here is a 95-residue protein sequence, read N- to C-terminus: Aspartyl/glutamyl-tRNA(Asn/Gln) amidotransferase subunit C (95 aa).

Belongs to the GatC family. In terms of assembly, heterotrimer of A, B and C subunits.

The enzyme catalyses L-glutamyl-tRNA(Gln) + L-glutamine + ATP + H2O = L-glutaminyl-tRNA(Gln) + L-glutamate + ADP + phosphate + H(+). It catalyses the reaction L-aspartyl-tRNA(Asn) + L-glutamine + ATP + H2O = L-asparaginyl-tRNA(Asn) + L-glutamate + ADP + phosphate + 2 H(+). Its function is as follows. Allows the formation of correctly charged Asn-tRNA(Asn) or Gln-tRNA(Gln) through the transamidation of misacylated Asp-tRNA(Asn) or Glu-tRNA(Gln) in organisms which lack either or both of asparaginyl-tRNA or glutaminyl-tRNA synthetases. The reaction takes place in the presence of glutamine and ATP through an activated phospho-Asp-tRNA(Asn) or phospho-Glu-tRNA(Gln). In Campylobacter concisus (strain 13826), this protein is Aspartyl/glutamyl-tRNA(Asn/Gln) amidotransferase subunit C.